The chain runs to 235 residues: Fms-related tyrosine kinase 3 ligand (235 aa).

Positions 1 to 26 (MTVLAPAWSPTTYLLLLLLLSSGLSG) are cleaved as a signal peptide. Over 27–184 (TQDCSFQHSP…EATAPTAPQP (158 aa)) the chain is Extracellular. 3 disulfide bridges follow: cysteine 30–cysteine 111, cysteine 70–cysteine 153, and cysteine 119–cysteine 158. Asparagine 126 and asparagine 149 each carry an N-linked (GlcNAc...) asparagine glycan. A helical membrane pass occupies residues 185-205 (PLLLLLLLPVGLLLLAAAWCL). Over 206-235 (HWQRTRRRTPRPGEQVPPVPSPQDLLLVEH) the chain is Cytoplasmic. The segment at 213-235 (RTPRPGEQVPPVPSPQDLLLVEH) is disordered.

Homodimer (isoform 2).

It localises to the cell membrane. The protein localises to the secreted. Stimulates the proliferation of early hematopoietic cells by activating FLT3. Synergizes well with a number of other colony stimulating factors and interleukins. Required for the development of B cells, and dendritic cells (DCs). The sequence is that of Fms-related tyrosine kinase 3 ligand (FLT3LG) from Homo sapiens (Human).